A 141-amino-acid polypeptide reads, in one-letter code: Large ribosomal subunit protein uL11 (141 aa).

Belongs to the universal ribosomal protein uL11 family. In terms of assembly, part of the ribosomal stalk of the 50S ribosomal subunit. Interacts with L10 and the large rRNA to form the base of the stalk. L10 forms an elongated spine to which L12 dimers bind in a sequential fashion forming a multimeric L10(L12)X complex. In terms of processing, one or more lysine residues are methylated.

Its function is as follows. Forms part of the ribosomal stalk which helps the ribosome interact with GTP-bound translation factors. This Carboxydothermus hydrogenoformans (strain ATCC BAA-161 / DSM 6008 / Z-2901) protein is Large ribosomal subunit protein uL11.